The primary structure comprises 544 residues: Chaperonin GroEL (544 aa).

ATP is bound by residues 30–33 (TLGP), lysine 51, 87–91 (DGTTT), glycine 415, 481–483 (DAL), and aspartate 497.

Belongs to the chaperonin (HSP60) family. As to quaternary structure, forms a cylinder of 14 subunits composed of two heptameric rings stacked back-to-back. Interacts with the co-chaperonin GroES.

It localises to the cytoplasm. It catalyses the reaction ATP + H2O + a folded polypeptide = ADP + phosphate + an unfolded polypeptide.. Its function is as follows. Together with its co-chaperonin GroES, plays an essential role in assisting protein folding. The GroEL-GroES system forms a nano-cage that allows encapsulation of the non-native substrate proteins and provides a physical environment optimized to promote and accelerate protein folding. In Chlamydia trachomatis serovar D (strain ATCC VR-885 / DSM 19411 / UW-3/Cx), this protein is Chaperonin GroEL.